We begin with the raw amino-acid sequence, 117 residues long: Flagellar transcriptional regulator FlhD (117 aa).

It belongs to the FlhD family. As to quaternary structure, homodimer; disulfide-linked. Forms a heterohexamer composed of two FlhC and four FlhD subunits. Each FlhC binds a FlhD dimer, forming a heterotrimer, and a hexamer assembles by dimerization of two heterotrimers.

Its subcellular location is the cytoplasm. In terms of biological role, functions in complex with FlhC as a master transcriptional regulator that regulates transcription of several flagellar and non-flagellar operons by binding to their promoter region. Activates expression of class 2 flagellar genes, including fliA, which is a flagellum-specific sigma factor that turns on the class 3 genes. Also regulates genes whose products function in a variety of physiological pathways. In Erwinia amylovora (strain CFBP1430), this protein is Flagellar transcriptional regulator FlhD.